A 258-amino-acid polypeptide reads, in one-letter code: Maintenance of carboxysome distribution protein A (258 aa).

Residues Gly-11, Gly-12, Gln-13, Gly-14, Lys-15, Thr-16, Thr-17, Gln-40, Glu-147, Lys-151, Phe-182, Arg-183, Leu-216, Glu-217, Ser-218, and Tyr-221 each contribute to the ATP site. Residue Thr-16 coordinates Mg(2+).

Belongs to the ParA family. McdA subfamily. Homodimerizes in the presence of ATP, making extra nucleotide contacts than with ADP or AMP-PNP. Each subunit binds 1 ATP molecule; Glu-147, Lys-151 and Arg-183 cross the dimer interface to contact ATP in the other subunit, while Phe-182, Arg-183 and Tyr-221 stack with the adenine base in their own subunit. Forms a complex with McdB.

Its subcellular location is the cytoplasm. It localises to the nucleoid. It catalyses the reaction ATP + H2O = ADP + phosphate + H(+). In terms of biological role, mcdA and McdB together mediate carboxysome (Cb) spacing, size, ultrastructure and probably inheritance in the cell, together they prevent Cb aggregation. McdA is an ATPase that forms dynamic gradients on the nucleoid in response to adapter protein McdB, which associates with carboxysomes. The interplay between McdA gradients on the nucleoid and McdB-bound carboxysomes result in the equal spacing of Cbs along the cell length. Binds DNA saturably and strongly in the presence of Mg(2+)ATP; without ATP, DNA-binding is very poor (tested with a mutant that should not be able to hydrolyze ATP, Asp-38-Ala). Decreasing the NaCl concentration increases DNA binding. Incorrect positioning (aggregation) of carboxysomes results in reduced CO(2) fixation by encapsulated ribulose-1,5-bisphosphate carboxylase (RuBisCO, cbbL/cbbS), which leads to slower growth. The sequence is that of Maintenance of carboxysome distribution protein A from Gloeothece citriformis (strain PCC 7424) (Cyanothece sp. (strain PCC 7424)).